The following is a 264-amino-acid chain: Thiazole synthase (264 aa).

The Schiff-base intermediate with DXP role is filled by Lys-101. Residues Gly-162, 189–190, and 211–212 each bind 1-deoxy-D-xylulose 5-phosphate; these read AG and NT. The tract at residues 245 to 264 is disordered; that stretch reads KRQTASPSTPTLGQPFWHNQ.

It belongs to the ThiG family. Homotetramer. Forms heterodimers with either ThiH or ThiS.

The protein localises to the cytoplasm. It carries out the reaction [ThiS sulfur-carrier protein]-C-terminal-Gly-aminoethanethioate + 2-iminoacetate + 1-deoxy-D-xylulose 5-phosphate = [ThiS sulfur-carrier protein]-C-terminal Gly-Gly + 2-[(2R,5Z)-2-carboxy-4-methylthiazol-5(2H)-ylidene]ethyl phosphate + 2 H2O + H(+). It participates in cofactor biosynthesis; thiamine diphosphate biosynthesis. In terms of biological role, catalyzes the rearrangement of 1-deoxy-D-xylulose 5-phosphate (DXP) to produce the thiazole phosphate moiety of thiamine. Sulfur is provided by the thiocarboxylate moiety of the carrier protein ThiS. In vitro, sulfur can be provided by H(2)S. The chain is Thiazole synthase from Cellvibrio japonicus (strain Ueda107) (Pseudomonas fluorescens subsp. cellulosa).